We begin with the raw amino-acid sequence, 448 residues long: Bifunctional protein GlmU (448 aa).

Positions 1–230 are pyrophosphorylase; the sequence is MRSCLSIVLA…FDNIVGINNC (230 aa). UDP-N-acetyl-alpha-D-glucosamine is bound by residues 9 to 12, K23, Q76, and 81 to 82; these read LAAG and GT. D106 is a Mg(2+) binding site. G142, E156, N171, and N228 together coordinate UDP-N-acetyl-alpha-D-glucosamine. Residue N228 participates in Mg(2+) binding. Residues 231-251 are linker; the sequence is FELFEADSLWQKRKARDLMLS. Positions 252 to 448 are N-acetyltransferase; it reads GVTILKPETV…VRLSGNQQKK (197 aa). UDP-N-acetyl-alpha-D-glucosamine-binding residues include R317 and K335. H347 acts as the Proton acceptor in catalysis. Residues Y350 and N361 each coordinate UDP-N-acetyl-alpha-D-glucosamine. Residues A364, 370–371, S389, S407, and R424 each bind acetyl-CoA; that span reads NY.

This sequence in the N-terminal section; belongs to the N-acetylglucosamine-1-phosphate uridyltransferase family. The protein in the C-terminal section; belongs to the transferase hexapeptide repeat family. In terms of assembly, homotrimer. Requires Mg(2+) as cofactor.

The protein resides in the cytoplasm. It catalyses the reaction alpha-D-glucosamine 1-phosphate + acetyl-CoA = N-acetyl-alpha-D-glucosamine 1-phosphate + CoA + H(+). The catalysed reaction is N-acetyl-alpha-D-glucosamine 1-phosphate + UTP + H(+) = UDP-N-acetyl-alpha-D-glucosamine + diphosphate. It participates in nucleotide-sugar biosynthesis; UDP-N-acetyl-alpha-D-glucosamine biosynthesis; N-acetyl-alpha-D-glucosamine 1-phosphate from alpha-D-glucosamine 6-phosphate (route II): step 2/2. The protein operates within nucleotide-sugar biosynthesis; UDP-N-acetyl-alpha-D-glucosamine biosynthesis; UDP-N-acetyl-alpha-D-glucosamine from N-acetyl-alpha-D-glucosamine 1-phosphate: step 1/1. Its pathway is bacterial outer membrane biogenesis; LPS lipid A biosynthesis. In terms of biological role, catalyzes the last two sequential reactions in the de novo biosynthetic pathway for UDP-N-acetylglucosamine (UDP-GlcNAc). The C-terminal domain catalyzes the transfer of acetyl group from acetyl coenzyme A to glucosamine-1-phosphate (GlcN-1-P) to produce N-acetylglucosamine-1-phosphate (GlcNAc-1-P), which is converted into UDP-GlcNAc by the transfer of uridine 5-monophosphate (from uridine 5-triphosphate), a reaction catalyzed by the N-terminal domain. This Bartonella quintana (strain Toulouse) (Rochalimaea quintana) protein is Bifunctional protein GlmU.